Reading from the N-terminus, the 653-residue chain is Elongation factor 4 (653 aa).

Positions 1-30 are disordered; sequence MRTPCSQHRRDRPSAIGSQLPDADTLDTRQ. Residues 50 to 231 form the tr-type G domain; it reads AQIRNFCIIA…EVVRQVPPPQ (182 aa). GTP-binding positions include 62 to 67 and 178 to 181; these read DHGKST and NKID.

Belongs to the TRAFAC class translation factor GTPase superfamily. Classic translation factor GTPase family. LepA subfamily.

The protein localises to the cell membrane. The enzyme catalyses GTP + H2O = GDP + phosphate + H(+). Its function is as follows. Required for accurate and efficient protein synthesis under certain stress conditions. May act as a fidelity factor of the translation reaction, by catalyzing a one-codon backward translocation of tRNAs on improperly translocated ribosomes. Back-translocation proceeds from a post-translocation (POST) complex to a pre-translocation (PRE) complex, thus giving elongation factor G a second chance to translocate the tRNAs correctly. Binds to ribosomes in a GTP-dependent manner. The protein is Elongation factor 4 of Mycobacterium bovis (strain ATCC BAA-935 / AF2122/97).